Here is a 145-residue protein sequence, read N- to C-terminus: Salt stress-induced protein (145 aa).

Positions L3–P145 constitute a Jacalin-type lectin domain. 2 consecutive repeat copies span residues I6–S15 and I54–S64. Positions I6–S64 are 2 X approximate repeats, Gly-rich.

In terms of tissue distribution, sheaths and roots from mature plants and seedlings.

This Oryza sativa subsp. indica (Rice) protein is Salt stress-induced protein (SALT).